Consider the following 706-residue polypeptide: Polycomb protein SCMH1 (706 aa).

MBT repeat units lie at residues 28–126 (FTWD…LQPP) and 134–235 (SSWP…LQPP). Disordered stretches follow at residues 233-350 (QPPG…TVPS) and 576-595 (GSDR…RDPS). 2 stretches are compositionally biased toward basic residues: residues 272–283 (RGRKPGKKRGRT) and 304–319 (FPKK…RKPR). Positions 329–340 (PTTSTPEPDTST) are enriched in low complexity. The span at 576-591 (GSDRHLESRDPPRLSG) shows a compositional bias: basic and acidic residues. The SAM domain occupies 597 to 662 (WTVEDVMQFV…SFHIDRLKQV (66 aa)).

Belongs to the SCM family. As to quaternary structure, associates with a PRC1-like complex. Interacts with the SAM domain of PHC1 via its SAM domain in vitro. In terms of tissue distribution, most abundant in testis. Moderate levels detected in heart, brain, lung, liver, skeletal muscle and kidney and lower levels in spleen.

The protein resides in the nucleus. Its function is as follows. Associates with Polycomb group (PcG) multiprotein complexes; the complex class is required to maintain the transcriptionally repressive state of some genes. The sequence is that of Polycomb protein SCMH1 from Mus musculus (Mouse).